A 539-amino-acid chain; its full sequence is 4-hydroxybenzoate--CoA/benzoate--CoA ligase (539 aa).

It belongs to the ATP-dependent AMP-binding enzyme family. Benzoate-CoA ligase subfamily. Homodimer. The N-terminus is blocked.

It catalyses the reaction 4-hydroxybenzoate + ATP + CoA = 4-hydroxybenzoyl-CoA + AMP + diphosphate. The catalysed reaction is benzoate + ATP + CoA = benzoyl-CoA + AMP + diphosphate. Catalyzes the ligation of 4-hydroxybenzoate, benzoate or cyclohex-1,4-dienecarboxylate and CoA at the expense of ATP. The enzyme shows low activity towards cyclo-2,5-dienecarboxylate, 4-fluorobenzoate, 4-chlorobenzoate and 2-methoxybenzoate. The protein is 4-hydroxybenzoate--CoA/benzoate--CoA ligase (hbaA) of Rhodopseudomonas palustris (strain ATCC BAA-98 / CGA009).